Reading from the N-terminus, the 180-residue chain is Large ribosomal subunit protein uL5 (180 aa).

Belongs to the universal ribosomal protein uL5 family. Part of the 50S ribosomal subunit; part of the 5S rRNA/L5/L18/L25 subcomplex. Contacts the 5S rRNA and the P site tRNA. Forms a bridge to the 30S subunit in the 70S ribosome.

Functionally, this is one of the proteins that bind and probably mediate the attachment of the 5S RNA into the large ribosomal subunit, where it forms part of the central protuberance. In the 70S ribosome it contacts protein S13 of the 30S subunit (bridge B1b), connecting the 2 subunits; this bridge is implicated in subunit movement. Contacts the P site tRNA; the 5S rRNA and some of its associated proteins might help stabilize positioning of ribosome-bound tRNAs. The protein is Large ribosomal subunit protein uL5 of Lactobacillus helveticus (strain DPC 4571).